The primary structure comprises 24 residues: Pseudin-2 (24 aa).

In terms of tissue distribution, expressed by the skin glands.

The protein resides in the secreted. Antimicrobial peptide with activity against fungus (C.albicans) and Gram-positive and Gram-negative bacteria (S.aureus and E.coli). Also has low hemolytic activity against human erythrocytes. The protein is Pseudin-2 of Pseudis paradoxa (Paradoxical frog).